We begin with the raw amino-acid sequence, 208 residues long: MKIVEVKHPLVKHKLGLMREHDISTKRFRELASEVGSLLTYEATADLATEKVTIEGWNGPVEVEQIKGKKITVVPILRAGLGMMEGVLEHVPSARISVVGIYRNEETLEPVPYFQKLVSNIDERMALVVDPMLATGGSMIATIDLLKNAGCTSIKVLVLVAAPEGIAALEKAHPDVELYTASVDKGLNEHGYIIPGLGDAGDKIFGTK.

5-phospho-alpha-D-ribose 1-diphosphate contacts are provided by residues Arg-78, Arg-103, and 130–138 (DPMLATGGS). Uracil contacts are provided by residues Ile-193 and 198 to 200 (GDA). Residue Asp-199 participates in 5-phospho-alpha-D-ribose 1-diphosphate binding.

It belongs to the UPRTase family. Requires Mg(2+) as cofactor.

It carries out the reaction UMP + diphosphate = 5-phospho-alpha-D-ribose 1-diphosphate + uracil. Its pathway is pyrimidine metabolism; UMP biosynthesis via salvage pathway; UMP from uracil: step 1/1. With respect to regulation, allosterically activated by GTP. Its function is as follows. Catalyzes the conversion of uracil and 5-phospho-alpha-D-ribose 1-diphosphate (PRPP) to UMP and diphosphate. The protein is Uracil phosphoribosyltransferase of Klebsiella pneumoniae (strain 342).